The chain runs to 202 residues: Large ribosomal subunit protein bL25 (202 aa).

The interval 180–202 (PKQEAFEEDAEPSPGEEPEGENQ) is disordered. Residues 185-202 (FEEDAEPSPGEEPEGENQ) are compositionally biased toward acidic residues.

It belongs to the bacterial ribosomal protein bL25 family. CTC subfamily. In terms of assembly, part of the 50S ribosomal subunit; part of the 5S rRNA/L5/L18/L25 subcomplex. Contacts the 5S rRNA. Binds to the 5S rRNA independently of L5 and L18.

In terms of biological role, this is one of the proteins that binds to the 5S RNA in the ribosome where it forms part of the central protuberance. The chain is Large ribosomal subunit protein bL25 from Bacillus velezensis (strain DSM 23117 / BGSC 10A6 / LMG 26770 / FZB42) (Bacillus amyloliquefaciens subsp. plantarum).